Here is a 336-residue protein sequence, read N- to C-terminus: tRNA N6-adenosine threonylcarbamoyltransferase (336 aa).

The Fe cation site is built by H114 and H118. Residues 136 to 140 (LVSGG), D169, G182, D186, and N275 each bind substrate. Residue D301 participates in Fe cation binding.

This sequence belongs to the KAE1 / TsaD family. It depends on Fe(2+) as a cofactor.

Its subcellular location is the cytoplasm. It catalyses the reaction L-threonylcarbamoyladenylate + adenosine(37) in tRNA = N(6)-L-threonylcarbamoyladenosine(37) in tRNA + AMP + H(+). Its function is as follows. Required for the formation of a threonylcarbamoyl group on adenosine at position 37 (t(6)A37) in tRNAs that read codons beginning with adenine. Is involved in the transfer of the threonylcarbamoyl moiety of threonylcarbamoyl-AMP (TC-AMP) to the N6 group of A37, together with TsaE and TsaB. TsaD likely plays a direct catalytic role in this reaction. This Streptococcus pneumoniae (strain CGSP14) protein is tRNA N6-adenosine threonylcarbamoyltransferase.